Reading from the N-terminus, the 197-residue chain is MSLSIDVTSLPSISSSIFKNESSSTTSTLSGKSIGRSEQYISPDAEAFNKYMLSKSPEDIGPSDSASNDPLTSFSIRSNAVKTNADAGVSMDSSTQSRPSSNVGCDQLDFSLTKGINVSANLDSCISISTDHKKEKSKKDKSRKYYPKIEADSDSEDYVLDDSDSDDGKCKNCKYKKKYFVLRMRMKQVAMQLIEDL.

Over residues 17-30 (IFKNESSSTTSTLS) the composition is skewed to low complexity. Disordered regions lie at residues 17 to 37 (IFKNESSSTTSTLSGKSIGRS) and 53 to 72 (LSKSPEDIGPSDSASNDPLT). Ser-67 bears the Phosphoserine; by host CK1 mark. Asp-92 is a binding site for Mg(2+). Ser-153, Ser-155, Ser-163, and Ser-165 each carry phosphoserine; by host.

It belongs to the rotavirus NSP5 family. Homodimer. Interacts with VP1. Interacts with VP2. Interacts with NSP2; this interaction leads to up-regulation of NSP5 hyperphosphorylation and formation of virus factories. Interacts with NSP6. Participates in the selective exclusion of host proteins from stress granules (SG) and P bodies (PB). Also participates in the sequestration of these remodeled organelles in viral factories. Mg(2+) is required as a cofactor. O-glycosylated. In terms of processing, hyperphosphorylated on serine residues, when in dimeric form. Phosphorylation by host CK1 is required for the hyperphosphorylation of NSP5 dimer.

The protein localises to the host cytoplasm. In terms of biological role, plays an essential role in the viral genome replication. Participates, together with NSP2, in the formation of viral factories (viroplasms), which are large inclusions in the host cytoplasm where replication intermediates are assembled and viral RNA replication takes place. Orchestrates the recruitment of viroplasmic proteins such as capsid proteins to these factories. Participates in the selective exclusion of host proteins from stress granules (SG) and P bodies (PB). Also participates in the sequestration of these remodeled organelles in viral factories. The chain is Non-structural protein 5 from Rotavirus A (strain RVA/Human/United Kingdom/ST3/1975/G4P2A[6]) (RV-A).